A 2070-amino-acid polypeptide reads, in one-letter code: HEAT repeat-containing protein 5B (2070 aa).

HEAT repeat units follow at residues glutamate 848–glutamate 885, valine 1062–alanine 1099, and leucine 1290–serine 1327. Serine 1737 is subject to Phosphoserine.

It belongs to the HEATR5 family. In terms of assembly, self-associates. Component of the aftiphilin/p200/gamma-synergin complex, at least composed of AFTPH/aftiphilin, HEATR5B/p200a and SYNRG/gamma-synergin, which plays a role in the AP1G1/AP-1-mediated protein trafficking from early to recycling endosomes and between the trans-Golgi network (TGN) and endosomes. Within the complex interacts with AFTPH/aftiphilin and SYNRG/gamma-synergin; the interactions are direct. Interacts with GGA1.

The protein localises to the cytoplasm. It is found in the perinuclear region. It localises to the cytoplasmic vesicle. Its subcellular location is the clathrin-coated vesicle. Its function is as follows. Component of clathrin-coated vesicles. Component of the aftiphilin/p200/gamma-synergin complex, which plays roles in AP1G1/AP-1-mediated protein trafficking including the trafficking of transferrin from early to recycling endosomes, and the membrane trafficking of furin and the lysosomal enzyme cathepsin D between the trans-Golgi network (TGN) and endosomes. The polypeptide is HEAT repeat-containing protein 5B (Heatr5b) (Mus musculus (Mouse)).